We begin with the raw amino-acid sequence, 336 residues long: Acetaldehyde dehydrogenase 1 (336 aa).

32–35 (SGVV) provides a ligand contact to NAD(+). Catalysis depends on Cys-150, which acts as the Acyl-thioester intermediate. Asn-309 is an NAD(+) binding site.

This sequence belongs to the acetaldehyde dehydrogenase family.

It catalyses the reaction acetaldehyde + NAD(+) + CoA = acetyl-CoA + NADH + H(+). The polypeptide is Acetaldehyde dehydrogenase 1 (mhpF) (Mycobacterium ulcerans (strain Agy99)).